We begin with the raw amino-acid sequence, 174 residues long: Mediator of RNA polymerase II transcription subunit 30 (174 aa).

Residues 113–166 adopt a coiled-coil conformation; that stretch reads VEDDSSKLEDRMANQLRAASEERREVLEVNKKLKQKNQQLKMIMDQLRNLIWEI.

The protein belongs to the Mediator complex subunit 30 family. Component of the Mediator complex.

The protein localises to the nucleus. Component of the Mediator complex, a coactivator involved in the regulated transcription of nearly all RNA polymerase II-dependent genes. Mediator functions as a bridge to convey information from gene-specific regulatory proteins to the basal RNA polymerase II transcription machinery. Mediator is recruited to promoters by direct interactions with regulatory proteins and serves as a scaffold for the assembly of a functional preinitiation complex with RNA polymerase II and the general transcription factors. The sequence is that of Mediator of RNA polymerase II transcription subunit 30 (med30) from Danio rerio (Zebrafish).